The following is a 284-amino-acid chain: tRNA pseudouridine synthase A (284 aa).

The active-site Nucleophile is the Asp-62. Tyr-120 contacts substrate.

Belongs to the tRNA pseudouridine synthase TruA family. As to quaternary structure, homodimer.

The enzyme catalyses uridine(38/39/40) in tRNA = pseudouridine(38/39/40) in tRNA. Formation of pseudouridine at positions 38, 39 and 40 in the anticodon stem and loop of transfer RNAs. In Thermosynechococcus vestitus (strain NIES-2133 / IAM M-273 / BP-1), this protein is tRNA pseudouridine synthase A.